We begin with the raw amino-acid sequence, 203 residues long: Proteasome subunit beta 2 (203 aa).

A propeptide spans 1 to 9 (MGEEFQVGA) (removed in mature form; by autocatalysis). Catalysis depends on threonine 10, which acts as the Nucleophile.

The protein belongs to the peptidase T1B family. In terms of assembly, the 20S proteasome core is composed of 14 alpha and 14 beta subunits that assemble into four stacked heptameric rings, resulting in a barrel-shaped structure. The two inner rings, each composed of seven catalytic beta subunits, are sandwiched by two outer rings, each composed of seven alpha subunits. The catalytic chamber with the active sites is on the inside of the barrel. Has a gated structure, the ends of the cylinder being occluded by the N-termini of the alpha-subunits. Is capped at one or both ends by the proteasome regulatory ATPase, PAN.

It is found in the cytoplasm. It catalyses the reaction Cleavage of peptide bonds with very broad specificity.. The formation of the proteasomal ATPase PAN-20S proteasome complex, via the docking of the C-termini of PAN into the intersubunit pockets in the alpha-rings, triggers opening of the gate for substrate entry. Interconversion between the open-gate and close-gate conformations leads to a dynamic regulation of the 20S proteasome proteolysis activity. Functionally, component of the proteasome core, a large protease complex with broad specificity involved in protein degradation. The sequence is that of Proteasome subunit beta 2 from Pyrobaculum neutrophilum (strain DSM 2338 / JCM 9278 / NBRC 100436 / V24Sta) (Thermoproteus neutrophilus).